Reading from the N-terminus, the 243-residue chain is Orotidine 5'-phosphate decarboxylase (243 aa).

Residues Asp-18, Lys-39, Asp-66–Thr-75, Thr-130, Arg-192, Gln-201, Gly-221, and Arg-222 contribute to the substrate site. Lys-68 functions as the Proton donor in the catalytic mechanism.

Belongs to the OMP decarboxylase family. Type 1 subfamily. Homodimer.

The catalysed reaction is orotidine 5'-phosphate + H(+) = UMP + CO2. The protein operates within pyrimidine metabolism; UMP biosynthesis via de novo pathway; UMP from orotate: step 2/2. In terms of biological role, catalyzes the decarboxylation of orotidine 5'-monophosphate (OMP) to uridine 5'-monophosphate (UMP). The chain is Orotidine 5'-phosphate decarboxylase from Synechococcus sp. (strain CC9311).